Reading from the N-terminus, the 472-residue chain is Protein translocase subunit SecD (472 aa).

6 helical membrane passes run 7-27 (LLLL…KLPL), 298-318 (LVAG…YYRL), 326-345 (SLMI…GVTL), 349-368 (GIAG…VLIF), 392-414 (AFSS…FWFG), and 432-452 (SLFT…LSLP).

This sequence belongs to the SecD/SecF family. SecD subfamily. In terms of assembly, forms a complex with SecF. Part of the essential Sec protein translocation apparatus which comprises SecA, SecYEG and auxiliary proteins SecDF. Other proteins may also be involved.

It localises to the cell inner membrane. Functionally, part of the Sec protein translocase complex. Interacts with the SecYEG preprotein conducting channel. SecDF uses the proton motive force (PMF) to complete protein translocation after the ATP-dependent function of SecA. Its function is as follows. Probably participates in protein translocation into and across both the cytoplasmic and thylakoid membranes in cyanobacterial cells. The chain is Protein translocase subunit SecD from Synechocystis sp. (strain ATCC 27184 / PCC 6803 / Kazusa).